The following is an 85-amino-acid chain: NAD(P)H-quinone oxidoreductase subunit L (85 aa).

The next 2 membrane-spanning stretches (helical) occupy residues 17–37 (IVAV…PGFV) and 54–74 (AFMY…SPFL).

The protein belongs to the complex I NdhL subunit family. As to quaternary structure, NDH-1 can be composed of about 15 different subunits; different subcomplexes with different compositions have been identified which probably have different functions.

It localises to the cellular thylakoid membrane. It carries out the reaction a plastoquinone + NADH + (n+1) H(+)(in) = a plastoquinol + NAD(+) + n H(+)(out). The enzyme catalyses a plastoquinone + NADPH + (n+1) H(+)(in) = a plastoquinol + NADP(+) + n H(+)(out). Its function is as follows. NDH-1 shuttles electrons from an unknown electron donor, via FMN and iron-sulfur (Fe-S) centers, to quinones in the respiratory and/or the photosynthetic chain. The immediate electron acceptor for the enzyme in this species is believed to be plastoquinone. Couples the redox reaction to proton translocation, and thus conserves the redox energy in a proton gradient. Cyanobacterial NDH-1 also plays a role in inorganic carbon-concentration. The polypeptide is NAD(P)H-quinone oxidoreductase subunit L (Crocosphaera subtropica (strain ATCC 51142 / BH68) (Cyanothece sp. (strain ATCC 51142))).